The primary structure comprises 538 residues: ATP synthase subunit beta, mitochondrial (538 aa).

215 to 222 (GGAGVGKT) contributes to the ATP binding site.

It belongs to the ATPase alpha/beta chains family. Subunit of the F-type ATPase which has 2 components, CF(1) - the catalytic core - and CF(0) - the membrane proton channel. Interacts (via N-terminus) with lov-1 (via PLAT domain). In terms of tissue distribution, expressed in three categories of adult male sensory neurons: tail ray B neurons, HOB hook neuron and head cephalic (CEM) neurons.

The protein resides in the cell projection. It is found in the cilium. The protein localises to the mitochondrion. Its subcellular location is the mitochondrion inner membrane. It carries out the reaction ATP + H2O + 4 H(+)(in) = ADP + phosphate + 5 H(+)(out). Its function is as follows. Mitochondrial membrane ATP synthase (F(1)F(0) ATP synthase or Complex V) produces ATP from ADP in the presence of a proton gradient across the membrane which is generated by electron transport complexes of the respiratory chain. F-type ATPases consist of two structural domains, F(1) - containing the extramembraneous catalytic core, and F(0) - containing the membrane proton channel, linked together by a central stalk and a peripheral stalk. During catalysis, ATP synthesis in the catalytic domain of F(1) is coupled via a rotary mechanism of the central stalk subunits to proton translocation. Subunits alpha and beta form the catalytic core in F(1). Rotation of the central stalk against the surrounding subunits leads to hydrolysis of ATP in three separate catalytic sites on the beta subunits. Required during male mating behavior for the response to hermaphrodite contact, acting with lov-1 and pkd-2. May be involved in polycystin signaling. The polypeptide is ATP synthase subunit beta, mitochondrial (Caenorhabditis elegans).